Here is a 401-residue protein sequence, read N- to C-terminus: Adaptive-response sensory kinase SasA (401 aa).

One can recognise a Histidine kinase domain in the interval 175-400 (MLVHDLRNPL…WFHFTLPVYP (226 aa)). Histidine 178 carries the phosphohistidine; by autocatalysis modification.

Homooligomerizes. Interacts with KaiC. Participates in the KaiABC clock complex, whose core is composed of a KaiC homohexamer, 6 KaiB and up to 6 KaiA dimers. SasA and KaiB(fs) compete to bind to KaiC.

It carries out the reaction ATP + protein L-histidine = ADP + protein N-phospho-L-histidine.. Functionally, member of the two-component regulatory system SasA/RpaA involved in genome-wide circadian gene expression. One of several clock output pathways. Participates in the Kai clock protein complex, the main circadian regulator in cyanobacteria, via its interaction with KaiC. KaiC enhances the autophosphorylation activity of SasA, which then transfers its phosphate group to RpaA to activate it. In addition to its output function, recruits fold-shifted KaiB (KaiB(fs)) to KaiC to cooperatively form the KaiB(6):KaiC(6) complex (independent of SasA kinase activity). Required for robustness of the circadian rhythm of gene expression and is involved in clock output, also required for adaptation to light/dark cycles. The chain is Adaptive-response sensory kinase SasA from Nostoc sp. (strain PCC 7120 / SAG 25.82 / UTEX 2576).